Consider the following 349-residue polypeptide: MVKLFCSIVGVAGSPFSVEVNEGKTVDDLKKAIKAENLDDPTLRNVAPKNLQLFLAKKGDAWLRYNEDLDTYLQSEIDTSSYLHMRASWKLSKPTLFGPDVSLGEDVVHVLVVVPGQRLPIAATAIHEPHPARKKRWEELNKILDRNQRAKVNAAGESSTGYSYVSFSDVDRVMRARRYEQPRKVIENEKIDVLYEYLLLLTKAFGEIVNGKEAKRLYFIVPVLVCVCGLFDGEVRILAEETVTGKRVHGDGAFEFVIERGSKRVCIVKAKRDDFQQGLAQAYVGSEVLADLEGLTDLFSIVTNFKEWYFSRCLNDRVERDDATMDMEHDIPTREAVKKIAEKIYSMLS.

The signal sequence occupies residues 1–17 (MVKLFCSIVGVAGSPFS). Residues 18-57 (VEVNEGKTVDDLKKAIKAENLDDPTLRNVAPKNLQLFLAK) are LQLFLAK domain. Positions 58–108 (KGDAWLRYNEDLDTYLQSEIDTSSYLHMRASWKLSKPTLFGPDVSLGEDVV) are DWL domain. The HVLVXXP motif motif lies at 109–115 (HVLVVVP).

This sequence belongs to the Crinkler effector family.

It is found in the secreted. The protein resides in the host nucleus. In terms of biological role, secreted effector that elicits necrosis in host plants, a characteristic of plant innate immunity. The sequence is that of Crinkler effector protein 5 from Phytophthora infestans (Potato late blight agent).